The following is a 161-amino-acid chain: pEARLI1-like lipid transfer protein 1 (161 aa).

An N-terminal signal peptide occupies residues 1 to 25 (MASKNSASLALFFALNILFFTLTVA). Residues 32 to 39 (PSPKPKPV) form an A-1 repeat. The segment at 32-76 (PSPKPKPVPSPKPKPVQCPPPPRPSVPSPNPRPVTPPRTPGSSGN) is disordered. Residues 33 to 70 (SPKPKPVPSPKPKPVQCPPPPRPSVPSPNPRPVTPPRT) are compositionally biased toward pro residues. Positions 34 to 49 (PKPKPVPSPKPKPVQC) are 2 X 8 AA tandem repeats A of P-S-P-K-P-K-P-V. An A-2 repeat occupies 40 to 47 (PSPKPKPV).

This sequence belongs to the plant LTP family. PEARLI1 subfamily. Self-interacts and binds to DIR1. Interacts with PDLP1.

It is found in the secreted. The protein localises to the cell wall. The protein resides in the endoplasmic reticulum. It localises to the cell junction. Its subcellular location is the plasmodesma. It is found in the plastid. The protein localises to the chloroplast. Its function is as follows. Probable lipid transfer protein (LTP). Seems to control the flowering process and lignin synthesis. Together with DIR1, required for glycerol-3-phosphate- (G3P) and azelaic acid- (AA) induced systemic acquired resistance (SAR). Component of plant systemic immunity involved in priming defenses in a AA-dependent manner, by modulating production and/or translocation of a mobile signal(s) during SAR. Confers resistance to Botrytis cinerea and Pseudomonas syringae pv. tomato DC3000 and PmaDG3. May be involved in induced systemic resistance (ISR) mediated by non-pathogenic bacteria (e.g. P. fluorescens GM30). Prevents electrolyte leakage during freezing damage. The protein is pEARLI1-like lipid transfer protein 1 (AZI1) of Arabidopsis thaliana (Mouse-ear cress).